The primary structure comprises 566 residues: Proline--tRNA ligase 1 (566 aa).

Belongs to the class-II aminoacyl-tRNA synthetase family. ProS type 1 subfamily. As to quaternary structure, homodimer.

The protein resides in the cytoplasm. It carries out the reaction tRNA(Pro) + L-proline + ATP = L-prolyl-tRNA(Pro) + AMP + diphosphate. Functionally, catalyzes the attachment of proline to tRNA(Pro) in a two-step reaction: proline is first activated by ATP to form Pro-AMP and then transferred to the acceptor end of tRNA(Pro). As ProRS can inadvertently accommodate and process non-cognate amino acids such as alanine and cysteine, to avoid such errors it has two additional distinct editing activities against alanine. One activity is designated as 'pretransfer' editing and involves the tRNA(Pro)-independent hydrolysis of activated Ala-AMP. The other activity is designated 'posttransfer' editing and involves deacylation of mischarged Ala-tRNA(Pro). The misacylated Cys-tRNA(Pro) is not edited by ProRS. The chain is Proline--tRNA ligase 1 from Bacillus cereus (strain ATCC 14579 / DSM 31 / CCUG 7414 / JCM 2152 / NBRC 15305 / NCIMB 9373 / NCTC 2599 / NRRL B-3711).